The primary structure comprises 342 residues: Serine/threonine-protein kinase ISR1 (342 aa).

Residues 59 to 342 (WRLTRVLGCG…SNARVAEHAF (284 aa)) form the Protein kinase domain. ATP-binding positions include 65–73 (LGCGSVACV) and Lys-84. Asp-190 functions as the Proton acceptor in the catalytic mechanism.

This sequence belongs to the protein kinase superfamily. Ser/Thr protein kinase family.

The catalysed reaction is L-seryl-[protein] + ATP = O-phospho-L-seryl-[protein] + ADP + H(+). It carries out the reaction L-threonyl-[protein] + ATP = O-phospho-L-threonyl-[protein] + ADP + H(+). Probable serine/threonine protein kinase which may function redundantly with MPK1-independent branch of the PCK1 pathway. This is Serine/threonine-protein kinase ISR1 (ISR1) from Eremothecium gossypii (strain ATCC 10895 / CBS 109.51 / FGSC 9923 / NRRL Y-1056) (Yeast).